A 606-amino-acid chain; its full sequence is Thrombospondin-related anonymous protein (606 aa).

The N-terminal stretch at 1–24 (MKLLGNSKYFFVVLLLCISVFLNG) is a signal peptide. Residues 43 to 228 (DLHILLDGSG…TMIKPFLSKV (186 aa)) form the VWFA domain. The TSP type-1 domain occupies 235-281 (VALCGKWEEWSECSTTCDNGTKIRKRKVLHPNCAGEMTAPCKVRDCP). The segment at 301-541 (PVEPIEPAEP…SKKQSKSNNG (241 aa)) is disordered. Composition is skewed to low complexity over residues 409–425 (ENPF…IIAP), 440–450 (ELPNNLPESPS), and 459–479 (PNDN…IPNK). Basic and acidic residues-rich tracts occupy residues 487-504 (NPYK…RSND) and 516-532 (DKLE…ENKS). Residues 544-564 (IAGGIIGGLAIIGCIGVGYNF) form a helical membrane-spanning segment.

In terms of assembly, interacts (via integrin-like A-domain) with Anopheles gambiae saglin/SG1F; the interaction probably promotes sporozoite invasion of salivary gland. Interacts (via integrin-like A-domain) with human AHSG; the interaction promotes sporozoite invasion of hepatocytes and formation of exoerythrocytic forms of parasites in human hepatoma HepG2 cells.

The protein resides in the cell membrane. It localises to the cytoplasm. In terms of biological role, promotes parasite ability to invade host hepatocytes. Promotes parasite ability to invade mosquito salivary glands. Required for sporozoite gliding motility. The sequence is that of Thrombospondin-related anonymous protein from Plasmodium berghei (strain Anka).